A 287-amino-acid chain; its full sequence is Maleylpyruvate hydrolase (287 aa).

A divalent metal cation is bound by residues glutamate 143, glutamate 145, and aspartate 174.

Belongs to the FAH family. Homodimer.

The catalysed reaction is 3-maleylpyruvate + H2O = maleate + pyruvate + H(+). With respect to regulation, activated by Mn(2+). Inhibited by Ni(2+), Cd(2+), Co(2+) or Cu(2+). In terms of biological role, involved in the degradation of gentisate. Catalyzes the hydrolysis of 3-maleylpyruvate, the ring-cleavage product of gentisate. The sequence is that of Maleylpyruvate hydrolase from Aquipseudomonas alcaligenes (Pseudomonas alcaligenes).